We begin with the raw amino-acid sequence, 216 residues long: Large ribosomal subunit protein uL1 (216 aa).

This sequence belongs to the universal ribosomal protein uL1 family.

The polypeptide is Large ribosomal subunit protein uL1 (Oryza sativa subsp. indica (Rice)).